The primary structure comprises 246 residues: 23S rRNA (guanosine-2'-O-)-methyltransferase RlmB (246 aa).

S-adenosyl-L-methionine is bound by residues Gly-196, Ile-216, and Leu-225.

This sequence belongs to the class IV-like SAM-binding methyltransferase superfamily. RNA methyltransferase TrmH family. RlmB subfamily. In terms of assembly, homodimer.

The protein resides in the cytoplasm. The enzyme catalyses guanosine(2251) in 23S rRNA + S-adenosyl-L-methionine = 2'-O-methylguanosine(2251) in 23S rRNA + S-adenosyl-L-homocysteine + H(+). Specifically methylates the ribose of guanosine 2251 in 23S rRNA. The sequence is that of 23S rRNA (guanosine-2'-O-)-methyltransferase RlmB from Yersinia pestis.